We begin with the raw amino-acid sequence, 239 residues long: Ribonuclease PH (239 aa).

Phosphate contacts are provided by residues Arg86 and 124 to 126 (GTR).

It belongs to the RNase PH family. Homohexameric ring arranged as a trimer of dimers.

It carries out the reaction tRNA(n+1) + phosphate = tRNA(n) + a ribonucleoside 5'-diphosphate. In terms of biological role, phosphorolytic 3'-5' exoribonuclease that plays an important role in tRNA 3'-end maturation. Removes nucleotide residues following the 3'-CCA terminus of tRNAs; can also add nucleotides to the ends of RNA molecules by using nucleoside diphosphates as substrates, but this may not be physiologically important. Probably plays a role in initiation of 16S rRNA degradation (leading to ribosome degradation) during starvation. The protein is Ribonuclease PH of Rickettsia bellii (strain RML369-C).